A 77-amino-acid chain; its full sequence is U8-lycotoxin-Ls1d (77 aa).

An N-terminal signal peptide occupies residues 1–20 (MKLIIFTGLVLFAIVSLIEA). Residues 21-26 (QAENEK) constitute a propeptide that is removed on maturation.

This sequence belongs to the neurotoxin 19 (CSTX) family. 08 (U8-Lctx) subfamily. Post-translationally, contains 4 disulfide bonds. As to expression, expressed by the venom gland.

Its subcellular location is the secreted. In Lycosa singoriensis (Wolf spider), this protein is U8-lycotoxin-Ls1d.